Here is a 351-residue protein sequence, read N- to C-terminus: UDP-glucose 4-epimerase 5 (351 aa).

NAD(+)-binding positions include 13-15 (GYI), 34-38 (DNLDN), 64-65 (DL), F86, and K90. Residue 130 to 132 (SAT) participates in substrate binding. The active-site Proton acceptor is Y154. Residues K158 and Y182 each contribute to the NAD(+) site. Substrate contacts are provided by residues 182-184 (YFN), 203-205 (NNL), 221-223 (TVF), R236, and 298-301 (RPGD).

Belongs to the NAD(P)-dependent epimerase/dehydratase family. In terms of assembly, forms homodimers and heterodimers. The cofactor is NAD(+). As to expression, widely expressed.

It catalyses the reaction UDP-alpha-D-glucose = UDP-alpha-D-galactose. It functions in the pathway carbohydrate metabolism; galactose metabolism. With respect to regulation, enhanced activity by NaCl. Inhibited by UDP. In terms of biological role, catalyzes the interconversion between UDP-glucose and UDP-galactose. The chain is UDP-glucose 4-epimerase 5 from Arabidopsis thaliana (Mouse-ear cress).